The sequence spans 910 residues: Leucine--tRNA ligase (910 aa).

The 'HIGH' region signature appears at 50–60 (PYTNGSLHVGH). The 'KMSKS' region signature appears at 611–615 (KISKS). Residue K614 coordinates ATP.

This sequence belongs to the class-I aminoacyl-tRNA synthetase family.

Its subcellular location is the cytoplasm. It catalyses the reaction tRNA(Leu) + L-leucine + ATP = L-leucyl-tRNA(Leu) + AMP + diphosphate. This Thermoplasma volcanium (strain ATCC 51530 / DSM 4299 / JCM 9571 / NBRC 15438 / GSS1) protein is Leucine--tRNA ligase.